The primary structure comprises 244 residues: Ribonuclease 3 (244 aa).

The RNase III domain occupies 17-146 (FEKKMQELNL…FVGALYLDQG (130 aa)). E59 serves as a coordination point for Mg(2+). D63 is a catalytic residue. Mg(2+) is bound by residues D132 and E135. Residue E135 is part of the active site. The region spanning 172–241 (DFKTQFQEYV…AERAYKILKN (70 aa)) is the DRBM domain.

This sequence belongs to the ribonuclease III family. As to quaternary structure, homodimer. Mg(2+) serves as cofactor.

It localises to the cytoplasm. The enzyme catalyses Endonucleolytic cleavage to 5'-phosphomonoester.. Its function is as follows. Digests double-stranded RNA. Involved in the processing of primary rRNA transcript to yield the immediate precursors to the large and small rRNAs (23S and 16S). Processes some mRNAs, and tRNAs when they are encoded in the rRNA operon. Processes pre-crRNA and tracrRNA of type II CRISPR loci if present in the organism. This Staphylococcus saprophyticus subsp. saprophyticus (strain ATCC 15305 / DSM 20229 / NCIMB 8711 / NCTC 7292 / S-41) protein is Ribonuclease 3.